The sequence spans 174 residues: Isomerase prhC (174 aa).

This sequence belongs to the trt14 isomerase family. As to quaternary structure, homodimer.

It participates in secondary metabolite biosynthesis; terpenoid biosynthesis. Its function is as follows. Isomerase; part of the gene cluster that mediates the biosynthesis of paraherquonin, a meroterpenoid with a unique, highly congested hexacyclic molecular architecture. The first step of the pathway is the synthesis of 3,5-dimethylorsellinic acid (DMOA) by the polyketide synthase prhL. Synthesis of DMOA is followed by farnesylation by the prenyltransferase prhE, methylesterification by the methyl-transferase prhM, epoxidation of the prenyl chain by the flavin-dependent monooxygenase prhF, and cyclization of the farnesyl moiety by the terpene cyclase prhH, to yield the tetracyclic intermediate, protoaustinoid A. The short chain dehydrogenase prhI then oxidizes the C-3 alcohol group of the terpene cyclase product to transform protoaustinoid A into protoaustinoid B. The FAD-binding monooxygenase prhJ catalyzes the oxidation of protoaustinoid B into preaustinoid A which is further oxidized into preaustinoid A1 by FAD-binding monooxygenase phrK. Finally, prhA leads to berkeleydione via the berkeleyone B intermediate. PrhA is a multifunctional dioxygenase that first desaturates at C5-C6 to form berkeleyone B, followed by rearrangement of the A/B-ring to form the cycloheptadiene moiety in berkeleydione. Berkeleydione serves as the key intermediate for the biosynthesis of paraherquonin as well as many other meroterpenoids. The cytochrome P450 monooxygenases prhB, prhD, and prhN, as well as the isomerase prhC, are probably involved in the late stage of paraherquonin biosynthesis, after the production of berkeleydione. Especially prhC might be a multifunctional enzyme that catalyzes the D-ring expansion via intramolecular methoxy rearrangement, as well as the hydrolysis of the expanded D-ring. The sequence is that of Isomerase prhC from Penicillium brasilianum.